A 559-amino-acid polypeptide reads, in one-letter code: uncharacterized protein (559 aa).

11 helical membrane passes run 103 to 123 (LAALIAGNVFIAMPMTLNGLF), 139 to 159 (FGYYFNTLIILLRFIAGLFYY), 192 to 212 (AGITSDFLISYFVYWVISFPF), 223 to 243 (FFLIKSISTYIACFAMLIFLL), 263 to 283 (WSWVFMCALNSSVAGFSTLAV), 302 to 322 (MLILPLVAAVSAPIGIVSGVA), 348 to 368 (AAAFFMGLTYLVSMIAQNISD), 387 to 407 (IRRAQVIVIIIGAWAIVPWKI), 413 to 434 (AFLAFLGSLSIFLGPAAGIFVA), 466 to 486 (ALIAFLCACVPLIPGMAMSIN), and 501 to 521 (IGYFYSFMTAFLIYWGLNLVF).

It belongs to the purine-cytosine permease (2.A.39) family.

The protein resides in the golgi apparatus membrane. This is an uncharacterized protein from Schizosaccharomyces pombe (strain 972 / ATCC 24843) (Fission yeast).